The chain runs to 103 residues: Large ribosomal subunit protein bL21 (103 aa).

This sequence belongs to the bacterial ribosomal protein bL21 family. In terms of assembly, part of the 50S ribosomal subunit. Contacts protein L20.

Its function is as follows. This protein binds to 23S rRNA in the presence of protein L20. The chain is Large ribosomal subunit protein bL21 from Pasteurella multocida (strain Pm70).